Consider the following 411-residue polypeptide: Carbamoyl phosphate synthase arginine-specific small chain (411 aa).

L-glutamine is bound by residues Ser-50, Gly-232, and Gly-234. The 192-residue stretch at 185–376 (NVALIDCGVK…FDNIEKYQLQ (192 aa)) folds into the Glutamine amidotransferase type-1 domain. The Nucleophile role is filled by Cys-264. L-glutamine is bound by residues Leu-265, Gln-268, Asn-306, Gly-308, and Tyr-309. Catalysis depends on residues His-349 and Glu-351.

It belongs to the CarA family. Heterodimer composed of 2 chains; the small (or glutamine) chain promotes the hydrolysis of glutamine to ammonia, which is used by the large (or ammonia) chain to synthesize carbamoyl phosphate.

Its subcellular location is the cytoplasm. The catalysed reaction is hydrogencarbonate + L-glutamine + 2 ATP + H2O = carbamoyl phosphate + L-glutamate + 2 ADP + phosphate + 2 H(+). It carries out the reaction L-glutamine + H2O = L-glutamate + NH4(+). Its pathway is amino-acid biosynthesis; L-arginine biosynthesis; carbamoyl phosphate from bicarbonate: step 1/1. Functionally, small subunit of the arginine-specific carbamoyl phosphate synthase (CPSase). CPSase catalyzes the formation of carbamoyl phosphate from the ammonia moiety of glutamine, carbonate, and phosphate donated by ATP, constituting the first step of 2 biosynthetic pathways, one leading to arginine and/or urea and the other to pyrimidine nucleotides. The small subunit (glutamine amidotransferase) binds and cleaves glutamine to supply the large subunit with the substrate ammonia. The polypeptide is Carbamoyl phosphate synthase arginine-specific small chain (CPA1) (Saccharomyces cerevisiae (strain ATCC 204508 / S288c) (Baker's yeast)).